The sequence spans 478 residues: Protein nucleotidyltransferase YdiU (478 aa).

ATP-binding residues include glycine 84, glycine 86, arginine 87, lysine 107, aspartate 119, glycine 120, arginine 170, and arginine 177. Residue aspartate 246 is the Proton acceptor of the active site. The Mg(2+) site is built by asparagine 247 and aspartate 256. An ATP-binding site is contributed by aspartate 256.

The protein belongs to the SELO family. Mg(2+) is required as a cofactor. Mn(2+) serves as cofactor.

It carries out the reaction L-seryl-[protein] + ATP = 3-O-(5'-adenylyl)-L-seryl-[protein] + diphosphate. The enzyme catalyses L-threonyl-[protein] + ATP = 3-O-(5'-adenylyl)-L-threonyl-[protein] + diphosphate. The catalysed reaction is L-tyrosyl-[protein] + ATP = O-(5'-adenylyl)-L-tyrosyl-[protein] + diphosphate. It catalyses the reaction L-histidyl-[protein] + UTP = N(tele)-(5'-uridylyl)-L-histidyl-[protein] + diphosphate. It carries out the reaction L-seryl-[protein] + UTP = O-(5'-uridylyl)-L-seryl-[protein] + diphosphate. The enzyme catalyses L-tyrosyl-[protein] + UTP = O-(5'-uridylyl)-L-tyrosyl-[protein] + diphosphate. In terms of biological role, nucleotidyltransferase involved in the post-translational modification of proteins. It can catalyze the addition of adenosine monophosphate (AMP) or uridine monophosphate (UMP) to a protein, resulting in modifications known as AMPylation and UMPylation. The protein is Protein nucleotidyltransferase YdiU of Escherichia coli (strain ATCC 8739 / DSM 1576 / NBRC 3972 / NCIMB 8545 / WDCM 00012 / Crooks).